A 121-amino-acid chain; its full sequence is Ribosome-binding factor A (121 aa).

Belongs to the RbfA family. Monomer. Binds 30S ribosomal subunits, but not 50S ribosomal subunits or 70S ribosomes.

The protein resides in the cytoplasm. Its function is as follows. One of several proteins that assist in the late maturation steps of the functional core of the 30S ribosomal subunit. Associates with free 30S ribosomal subunits (but not with 30S subunits that are part of 70S ribosomes or polysomes). Required for efficient processing of 16S rRNA. May interact with the 5'-terminal helix region of 16S rRNA. This Clostridium acetobutylicum (strain ATCC 824 / DSM 792 / JCM 1419 / IAM 19013 / LMG 5710 / NBRC 13948 / NRRL B-527 / VKM B-1787 / 2291 / W) protein is Ribosome-binding factor A.